A 715-amino-acid chain; its full sequence is Methionine--tRNA ligase (715 aa).

A 'HIGH' region motif is present at residues 20–30 (PYANGKAHIGH). The Zn(2+) site is built by Cys-151, Cys-154, Cys-163, and Cys-167. The short motif at 334–338 (KFSKT) is the 'KMSKS' region element. Residue Lys-337 participates in ATP binding. Residues 559 to 593 (ANAKRNGVKGGEKEPSKSEGMGPSEASKASEKTVD) form a disordered region. One can recognise a tRNA-binding domain in the interval 613–715 (DFAKLDIRVG…KEIKSGSRIR (103 aa)).

It belongs to the class-I aminoacyl-tRNA synthetase family. MetG type 1 subfamily. In terms of assembly, homodimer. It depends on Zn(2+) as a cofactor.

It is found in the cytoplasm. It carries out the reaction tRNA(Met) + L-methionine + ATP = L-methionyl-tRNA(Met) + AMP + diphosphate. Is required not only for elongation of protein synthesis but also for the initiation of all mRNA translation through initiator tRNA(fMet) aminoacylation. The polypeptide is Methionine--tRNA ligase (Methanosarcina mazei (strain ATCC BAA-159 / DSM 3647 / Goe1 / Go1 / JCM 11833 / OCM 88) (Methanosarcina frisia)).